The primary structure comprises 98 residues: Large ribosomal subunit protein uL23c (98 aa).

This sequence belongs to the universal ribosomal protein uL23 family. As to quaternary structure, part of the 50S ribosomal subunit.

The protein localises to the plastid. Its function is as follows. Binds to 23S rRNA. The chain is Large ribosomal subunit protein uL23c (rpl23) from Euglena longa (Euglenophycean alga).